A 533-amino-acid chain; its full sequence is Beta-glucosidase 22 (533 aa).

Residues 1 to 24 (MAVSSSTSTCSSFSLLLLLLLLAA) form the signal peptide. Residue Asn-41 is glycosylated (N-linked (GlcNAc...) asparagine). Residues Gln-61, His-161, and 206–207 (DE) contribute to the a beta-D-glucoside site. Glu-207 functions as the Proton donor in the catalytic mechanism. Cys-226 and Cys-234 are joined by a disulfide. N-linked (GlcNAc...) asparagine glycosylation is found at Asn-233 and Asn-238. A beta-D-glucoside-binding residues include Tyr-350 and Glu-421. Residue Glu-421 is the Nucleophile of the active site. N-linked (GlcNAc...) asparagine glycosylation occurs at Asn-435. Trp-466 and Phe-482 together coordinate a beta-D-glucoside.

This sequence belongs to the glycosyl hydrolase 1 family.

The catalysed reaction is Hydrolysis of terminal, non-reducing beta-D-glucosyl residues with release of beta-D-glucose.. This is Beta-glucosidase 22 (BGLU22) from Oryza sativa subsp. japonica (Rice).